We begin with the raw amino-acid sequence, 421 residues long: MSKTHLTEQKFSDFALHPKVVEALEKKGFHNCTPIQALALPLTLAGRDVAGQAQTGTGKTMAFLTSTFHYLLSHPAIADRKVNQPRALIMAPTRELAVQIHADAEPLAEATGLKLGLAYGGDGYDKQLKVLESGVDILIGTTGRLIDYAKQNHINLGAIQVVVLDEADRMYDLGFIKDIRWLFRRMPPANQRLNMLFSATLSYRVRELAFEQMNNAEYIEVEPEQKTGHRIKEELFYPSNEEKMRLLQTLIEEEWPDRAIIFANTKHRCEEIWGHLAADGHRVGLLTGDVAQKKRLRILDEFTRGDLDILVATDVAARGLHIPAVTHVFNYDLPDDCEDYVHRIGRTGRAGASGHSISLACEEYALNLPAIETYIGHSIPVSKYNPDALMTDLPKPLRLTRPRTGNGPRRTGAPRNRRRSG.

The short motif at 9–37 is the Q motif element; the sequence is QKFSDFALHPKVVEALEKKGFHNCTPIQA. The region spanning 40–219 is the Helicase ATP-binding domain; the sequence is LPLTLAGRDV…FEQMNNAEYI (180 aa). Residue 53–60 participates in ATP binding; it reads AQTGTGKT. The DEAD box signature appears at 165-168; that stretch reads DEAD. One can recognise a Helicase C-terminal domain in the interval 245–390; that stretch reads RLLQTLIEEE…VSKYNPDALM (146 aa). Residues 392–421 are disordered; it reads DLPKPLRLTRPRTGNGPRRTGAPRNRRRSG. Over residues 402–414 the composition is skewed to low complexity; that stretch reads PRTGNGPRRTGAP.

Belongs to the DEAD box helicase family. RhlB subfamily. In terms of assembly, component of the RNA degradosome, which is a multiprotein complex involved in RNA processing and mRNA degradation.

The protein resides in the cytoplasm. It carries out the reaction ATP + H2O = ADP + phosphate + H(+). DEAD-box RNA helicase involved in RNA degradation. Has RNA-dependent ATPase activity and unwinds double-stranded RNA. In Escherichia coli O139:H28 (strain E24377A / ETEC), this protein is ATP-dependent RNA helicase RhlB.